A 61-amino-acid polypeptide reads, in one-letter code: N-acetyl-D-glucosamine kinase (61 aa).

Tyrosine 30 is subject to Phosphotyrosine. Serine 45 contributes to the ATP binding site.

It belongs to the eukaryotic-type N-acetylglucosamine kinase family. In terms of assembly, homodimer.

It catalyses the reaction N-acetyl-D-glucosamine + ATP = N-acetyl-D-glucosamine 6-phosphate + ADP + H(+). It carries out the reaction aldehydo-N-acetyl-D-mannosamine + ATP = aldehydo-N-acetyl-D-mannosamine 6-phosphate + ADP + H(+). The catalysed reaction is N-acetyl-D-muramoyl-L-alanyl-D-isoglutamine + ATP = 6-O-phospho-N-acetyl-D-muramoyl-L-alanyl-D-isoglutamine + ADP + H(+). Its pathway is amino-sugar metabolism; N-acetylneuraminate degradation. Functionally, converts endogenous N-acetylglucosamine (GlcNAc), a major component of complex carbohydrates, from lysosomal degradation or nutritional sources into GlcNAc 6-phosphate. Also has N-acetylmannosamine (ManNAc) kinase activity. Involved in the N-glycolylneuraminic acid (Neu5Gc) degradation pathway. Also involved in innate immunity by promoting detection of bacterial peptidoglycan by NOD2: acts by catalyzing phosphorylation of muramyl dipeptide (MDP), a fragment of bacterial peptidoglycan, to generate 6-O-phospho-muramyl dipeptide, which acts as a direct ligand for NOD2. This is N-acetyl-D-glucosamine kinase from Mesocricetus auratus (Golden hamster).